A 118-amino-acid chain; its full sequence is BET1 homolog (118 aa).

Residues 1 to 94 lie on the Cytoplasmic side of the membrane; the sequence is MRRAGLGEGV…LKILSRGSQT (94 aa). Positions 26 to 88 constitute a t-SNARE coiled-coil homology domain; sequence SACEEENERL…GKTMGKLKIL (63 aa). Residue Ser-50 is modified to Phosphoserine. Residues 95–115 form a helical; Anchor for type IV membrane protein membrane-spanning segment; the sequence is KLLCYMMLFSLFVFFIIYWII. Residues 116 to 118 lie on the Vesicular side of the membrane; it reads KLR.

Belongs to the BET1 family. Interacts with SNARE complex members GOSR2, SEC22B and STX5. Interacts with LMAN1/ERGIC53. Interacts with STX17. As to expression, expressed in muscle.

Its subcellular location is the endoplasmic reticulum membrane. It localises to the golgi apparatus. It is found in the cis-Golgi network membrane. The protein resides in the golgi apparatus membrane. Functionally, required for vesicular transport from the ER to the Golgi complex. Functions as a SNARE involved in the docking process of ER-derived vesicles with the cis-Golgi membrane. This chain is BET1 homolog (BET1), found in Homo sapiens (Human).